The primary structure comprises 475 residues: Eukaryotic translation initiation factor 3 subunit L (475 aa).

Positions 257–451 (DAIRMFSHIL…DLDYAMQGDL (195 aa)) constitute a PCI domain.

It belongs to the eIF-3 subunit L family. In terms of assembly, component of the eukaryotic translation initiation factor 3 (eIF-3) complex.

The protein resides in the cytoplasm. Functionally, component of the eukaryotic translation initiation factor 3 (eIF-3) complex, which is involved in protein synthesis of a specialized repertoire of mRNAs and, together with other initiation factors, stimulates binding of mRNA and methionyl-tRNAi to the 40S ribosome. The eIF-3 complex specifically targets and initiates translation of a subset of mRNAs involved in cell proliferation. The chain is Eukaryotic translation initiation factor 3 subunit L from Botryotinia fuckeliana (strain B05.10) (Noble rot fungus).